Consider the following 221-residue polypeptide: Phosphoglycolate phosphatase (221 aa).

Catalysis depends on Asp7, which acts as the Nucleophile. Mg(2+) is bound by residues Asp7 and Asp9. A substrate-binding site is contributed by Lys148. Residues Asp171 and Asp175 each contribute to the Mg(2+) site.

Belongs to the archaeal SPP-like hydrolase family. Requires Mg(2+) as cofactor.

The catalysed reaction is 2-phosphoglycolate + H2O = glycolate + phosphate. Functionally, catalyzes the dephosphorylation of 2-phosphoglycolate. This Methanothermobacter thermautotrophicus (strain ATCC 29096 / DSM 1053 / JCM 10044 / NBRC 100330 / Delta H) (Methanobacterium thermoautotrophicum) protein is Phosphoglycolate phosphatase.